Consider the following 304-residue polypeptide: Acetyl-coenzyme A carboxylase carboxyl transferase subunit beta (304 aa).

In terms of domain architecture, CoA carboxyltransferase N-terminal spans 23–292 (VWTKCDSCGQ…PNPDAPREGE (270 aa)). Residues Cys27, Cys30, Cys46, and Cys49 each coordinate Zn(2+). Residues 27–49 (CDSCGQVLYRAELERNLEVCPKC) form a C4-type zinc finger. The disordered stretch occupies residues 281–304 (PAPNPDAPREGEVVPPVPDQEPEA). Positions 295–304 (PPVPDQEPEA) are enriched in pro residues.

It belongs to the AccD/PCCB family. In terms of assembly, acetyl-CoA carboxylase is a heterohexamer composed of biotin carboxyl carrier protein (AccB), biotin carboxylase (AccC) and two subunits each of ACCase subunit alpha (AccA) and ACCase subunit beta (AccD). It depends on Zn(2+) as a cofactor.

It localises to the cytoplasm. It carries out the reaction N(6)-carboxybiotinyl-L-lysyl-[protein] + acetyl-CoA = N(6)-biotinyl-L-lysyl-[protein] + malonyl-CoA. Its pathway is lipid metabolism; malonyl-CoA biosynthesis; malonyl-CoA from acetyl-CoA: step 1/1. Component of the acetyl coenzyme A carboxylase (ACC) complex. Biotin carboxylase (BC) catalyzes the carboxylation of biotin on its carrier protein (BCCP) and then the CO(2) group is transferred by the transcarboxylase to acetyl-CoA to form malonyl-CoA. This Citrobacter koseri (strain ATCC BAA-895 / CDC 4225-83 / SGSC4696) protein is Acetyl-coenzyme A carboxylase carboxyl transferase subunit beta.